Consider the following 731-residue polypeptide: 1,4-alpha-glucan branching enzyme GlgB (731 aa).

Aspartate 412 acts as the Nucleophile in catalysis. Glutamate 465 acts as the Proton donor in catalysis.

Belongs to the glycosyl hydrolase 13 family. GlgB subfamily. As to quaternary structure, monomer.

It carries out the reaction Transfers a segment of a (1-&gt;4)-alpha-D-glucan chain to a primary hydroxy group in a similar glucan chain.. Its pathway is glycan biosynthesis; glycogen biosynthesis. Its function is as follows. Catalyzes the formation of the alpha-1,6-glucosidic linkages in glycogen by scission of a 1,4-alpha-linked oligosaccharide from growing alpha-1,4-glucan chains and the subsequent attachment of the oligosaccharide to the alpha-1,6 position. In Bordetella parapertussis (strain 12822 / ATCC BAA-587 / NCTC 13253), this protein is 1,4-alpha-glucan branching enzyme GlgB.